Consider the following 212-residue polypeptide: Thymidylate kinase (212 aa).

Position 10 to 17 (10 to 17) interacts with ATP; that stretch reads GGEGSGKT.

This sequence belongs to the thymidylate kinase family.

It carries out the reaction dTMP + ATP = dTDP + ADP. Phosphorylation of dTMP to form dTDP in both de novo and salvage pathways of dTTP synthesis. The sequence is that of Thymidylate kinase from Marinomonas sp. (strain MWYL1).